Consider the following 239-residue polypeptide: ATP-dependent dethiobiotin synthetase BioD (239 aa).

Glutamate 15 to phenylalanine 20 contacts ATP. Threonine 19 serves as a coordination point for Mg(2+). Lysine 40 is an active-site residue. ATP contacts are provided by residues aspartate 57, glutamate 118–glycine 121, asparagine 178–histidine 179, and alanine 211–leucine 213. Mg(2+) is bound by residues aspartate 57 and glutamate 118.

Belongs to the dethiobiotin synthetase family. As to quaternary structure, homodimer. Mg(2+) serves as cofactor.

The protein localises to the cytoplasm. The enzyme catalyses (7R,8S)-7,8-diammoniononanoate + CO2 + ATP = (4R,5S)-dethiobiotin + ADP + phosphate + 3 H(+). It participates in cofactor biosynthesis; biotin biosynthesis; biotin from 7,8-diaminononanoate: step 1/2. Its function is as follows. Catalyzes a mechanistically unusual reaction, the ATP-dependent insertion of CO2 between the N7 and N8 nitrogen atoms of 7,8-diaminopelargonic acid (DAPA, also called 7,8-diammoniononanoate) to form a ureido ring. This Burkholderia ambifaria (strain MC40-6) protein is ATP-dependent dethiobiotin synthetase BioD.